Here is a 146-residue protein sequence, read N- to C-terminus: UPF0178 protein BCAH820_3075 (146 aa).

This sequence belongs to the UPF0178 family.

This chain is UPF0178 protein BCAH820_3075, found in Bacillus cereus (strain AH820).